Reading from the N-terminus, the 545-residue chain is Cannabidiolic acid synthase-like 1 (545 aa).

The first 28 residues, 1–28, serve as a signal peptide directing secretion; that stretch reads MKCSTFCFWYVCKIIFFFLSFNIQISIA. Residues cysteine 37 and cysteine 99 are joined by a disulfide bond. Asparagine 45, asparagine 65, asparagine 89, and asparagine 168 each carry an N-linked (GlcNAc...) asparagine glycan. An FAD-binding PCMH-type domain is found at 77 to 251; that stretch reads TTPKPLVIIT…AAWKIRLVAV (175 aa). Positions 114 to 176 form a cross-link, 6-(S-cysteinyl)-8alpha-(pros-histidyl)-FAD (His-Cys); it reads HDAEGMSYIS…ENLSFPAGYC (63 aa). Histidine 292 provides a ligand contact to substrate. Asparagine 297, asparagine 305, asparagine 329, and asparagine 361 each carry an N-linked (GlcNAc...) asparagine glycan. A substrate-binding site is contributed by tyrosine 417. Asparagine 467 carries N-linked (GlcNAc...) asparagine glycosylation. Tyrosine 484 functions as the Proton acceptor in the catalytic mechanism. Asparagine 499 carries an N-linked (GlcNAc...) asparagine glycan.

The protein belongs to the oxygen-dependent FAD-linked oxidoreductase family. Requires FAD as cofactor. The FAD cofactor is bound via a bicovalent 6-S-cysteinyl, 8alpha-N1-histidyl FAD linkage.

It localises to the secreted. Functionally, has no cannabidiolic acid synthase activity. This Cannabis sativa (Hemp) protein is Cannabidiolic acid synthase-like 1 (CBDAS2).